An 854-amino-acid chain; its full sequence is Glucans biosynthesis glucosyltransferase H (854 aa).

7 helical membrane-spanning segments follow: residues 155-175, 209-229, 528-548, 583-603, 619-639, 671-691, and 695-715; these read ILLA…KTIL, ILVL…TALM, VFLT…FLVL, IALF…SVIL, FLSL…RMLF, FVRH…MAWL, and FLWW…VSVY.

It belongs to the glycosyltransferase 2 family. OpgH subfamily.

The protein resides in the cell inner membrane. It participates in glycan metabolism; osmoregulated periplasmic glucan (OPG) biosynthesis. In terms of biological role, involved in the biosynthesis of osmoregulated periplasmic glucans (OPGs). This chain is Glucans biosynthesis glucosyltransferase H, found in Pectobacterium atrosepticum (strain SCRI 1043 / ATCC BAA-672) (Erwinia carotovora subsp. atroseptica).